The following is a 490-amino-acid chain: 7-ethoxycoumarin O-deethylase (490 aa).

C432 contributes to the heme binding site.

Belongs to the cytochrome P450 family. It depends on heme as a cofactor.

Capable of dealkylating a model xenobiotic compound, 7-ethoxycoumarin. Metabolizes with high efficiency a wide range of xenobiotics, including alkoxycoumarins, alkoxyresorufins, and several herbicides of the class of phenylureas. Catalyzes the double N-dealkylation (oxidative N-demethylation) of phenylureas such as chlortoluron and isoproturon with turnover rates comparable to those reported for physiological substrates and produces non-phytotoxic compounds. Could be used for control of herbicide tolerance and selectivity, as well as soil and groundwater bioremediation. The chain is 7-ethoxycoumarin O-deethylase (CYP76B1) from Helianthus tuberosus (Jerusalem artichoke).